Here is a 306-residue protein sequence, read N- to C-terminus: MPETGQESSNPPAKESPFSIKSLLTCEPSRAVRPHKALFTPIKGALDGAAFALSPLTDLTFPRLEIPAQRFALPAHYLERSPAWWYSYTLAHGGHTPRTEVPDKSLLLGPTSPVSGGERDSPEPIHPLKAELEAKDSESKSPEEIILEESEPEEGKKDDSGEDWKKREESPDKKPCRKKKTRTVFSRSQVFQLESTFDMKRYLSSSERAGLAASLHLTETQVKIWFQNRRNKWKRQLAAELEAANLSHAAAQRIVRVPILYHENSSSAESASSAANVPVSQPLLTFPHPVYYSHPVVTSVPLLRPV.

The interval 95-181 (HTPRTEVPDK…DKKPCRKKKT (87 aa)) is disordered. 2 stretches are compositionally biased toward basic and acidic residues: residues 117–143 (GERD…KSPE) and 153–174 (EEGK…PDKK). A DNA-binding region (homeobox) is located at residues 178–237 (KKKTRTVFSRSQVFQLESTFDMKRYLSSSERAGLAASLHLTETQVKIWFQNRRNKWKRQL).

Belongs to the HMX homeobox family.

It is found in the nucleus. Its function is as follows. Transcription factor involved in specification of neuronal cell types and which is required for inner ear and hypothalamus development. Binds to the 5'-CAAGTG-3' core sequence. May act as a stage-specific inhibitor of anf1 in the anterior neural plate during the development. The polypeptide is Homeobox protein HMX3 (hmx3) (Xenopus tropicalis (Western clawed frog)).